The primary structure comprises 398 residues: Succinyl-diaminopimelate desuccinylase (398 aa).

H68 serves as a coordination point for Zn(2+). D70 is a catalytic residue. D101 contributes to the Zn(2+) binding site. Residue E135 is the Proton acceptor of the active site. Residues E136, E164, and H349 each coordinate Zn(2+).

Belongs to the peptidase M20A family. DapE subfamily. In terms of assembly, homodimer. Zn(2+) serves as cofactor. Co(2+) is required as a cofactor.

The enzyme catalyses N-succinyl-(2S,6S)-2,6-diaminopimelate + H2O = (2S,6S)-2,6-diaminopimelate + succinate. It functions in the pathway amino-acid biosynthesis; L-lysine biosynthesis via DAP pathway; LL-2,6-diaminopimelate from (S)-tetrahydrodipicolinate (succinylase route): step 3/3. Functionally, catalyzes the hydrolysis of N-succinyl-L,L-diaminopimelic acid (SDAP), forming succinate and LL-2,6-diaminopimelate (DAP), an intermediate involved in the bacterial biosynthesis of lysine and meso-diaminopimelic acid, an essential component of bacterial cell walls. The sequence is that of Succinyl-diaminopimelate desuccinylase from Wolbachia pipientis subsp. Culex pipiens (strain wPip).